The primary structure comprises 1079 residues: MTENKTKVKDLAAELGVTTKELGQVLKDMNISAKTSTSVIAQEDLPRIKERVQAQRDGGARKEGNPDVIVRRRHRDGDRASARAEAKAPEQEATAAMPETSAPERAEEADKPAVAKPAKAPETEAHARARKEPQAEPVKARIIRRPDEPAPVAKVVEAAPAETPAPEAPAVKATVTAEAAPAKTVEPESERPQADKPATARVVRPATPDASAVPDGTSSAPTLPVRSAEPSDTVERADADADGDDDDAQQRRRKKKRRQPEAVVPQVRVISRPDPAAVAQQQMQQQAAQQQREAGGYRPGGQRPEGGYRPEGQREGGYRPEGQREGGYRPGGAPRPEGGYRPGGPRPEGGYRPGAPRPEGGYRPAGGPRPEGQREGGYRPGAPRPEGGYRPAGGAPRPEGQREGGYRPAGGPPRPGGAPRPGGFGGAPGGMPVPGADGRGDQSKKKRQKGRRTVDFQADGPRGRSDDDVMRGPRGRGKRGKKDVRPAATQPLKAVKRKIKVDEAIRVADMAHQMGLKANEIIKVLFGLGVMATINQSLDIDTATVVAGEFGYEVEKVGFSEDDYLVPKEEDAPETLVTRPPVVTIMGHVDHGKTSLLDAIRKSNVTAGEAGGITQHIGAYHVTTKKGEIVFLDTPGHEAFTAMRARGAQITDLVVLVVAADDGVMEQTREAVNHSKAAGVPIMVAVNKMDKEGANPDRVIRELSELGLVAEDWGGDTIFAKVSAKTREGLDELLELIAIQAEILELKANPDKAARGHVVEAKLDKGRGPLATVLVQEGTLRQGDAFVCGVFAGRVRAMFDDQGRKVKEAGPSTPVEVQGFDGVVEAGEEFVSVADDKVARRIAESRAVKQRERELAKESKVTLETFLSRRADAAEALTLNLVLKADVQGTLEAISEAVRKLSTEKVKINIIHGGAGAITESDILLASASDAIIIGFNVRPTSKVKDIAEQENVDIRFYDIIYKLVDEIKSAMAGMLAPVQREVYLGQAEVRETFSVPKIGVIAGCHVADGKVTRNAGVRLLRDGVVVYTGKITSLKRFKDDVRDVQKGYECGMGLENFNDIKVGDVIEAFEMVEEAATL.

3 stretches are compositionally biased toward basic and acidic residues: residues Val52 to Asn65, Arg75 to Glu90, and Ala102 to Gln134. The segment at Val52–Ala488 is disordered. Residues Ala150–Thr184 show a composition bias toward low complexity. The segment covering Val185–Ala194 has biased composition (basic and acidic residues). The segment covering Ala276–Gln291 has biased composition (low complexity). The segment covering Gly306–Gly327 has biased composition (basic and acidic residues). Low complexity-rich tracts occupy residues Glu348–Pro370 and Pro380–Pro398. A compositionally biased stretch (gly residues) spans Pro419–Gly429. Residues Pro461 to Arg471 are compositionally biased toward basic and acidic residues. Residues Pro473–Lys482 show a composition bias toward basic residues. Residues Thr578–Glu745 enclose the tr-type G domain. Residues Gly587–Thr594 are G1. Residue Gly587–Thr594 coordinates GTP. Positions Gly612–His616 are G2. The interval Asp633 to Gly636 is G3. Residues Asp633–His637 and Asn687–Asp690 each bind GTP. The G4 stretch occupies residues Asn687–Asp690. Positions Ser723–Lys725 are G5.

This sequence belongs to the TRAFAC class translation factor GTPase superfamily. Classic translation factor GTPase family. IF-2 subfamily.

It localises to the cytoplasm. One of the essential components for the initiation of protein synthesis. Protects formylmethionyl-tRNA from spontaneous hydrolysis and promotes its binding to the 30S ribosomal subunits. Also involved in the hydrolysis of GTP during the formation of the 70S ribosomal complex. The polypeptide is Translation initiation factor IF-2 (Nitratidesulfovibrio vulgaris (strain ATCC 29579 / DSM 644 / CCUG 34227 / NCIMB 8303 / VKM B-1760 / Hildenborough) (Desulfovibrio vulgaris)).